The primary structure comprises 101 residues: Acylphosphatase (101 aa).

In terms of domain architecture, Acylphosphatase-like spans 12–98 (RAHVFVTGRV…EGLRGFEVKR (87 aa)). Catalysis depends on residues R27 and N45.

This sequence belongs to the acylphosphatase family.

It carries out the reaction an acyl phosphate + H2O = a carboxylate + phosphate + H(+). The protein is Acylphosphatase (acyP) of Nostoc sp. (strain PCC 7120 / SAG 25.82 / UTEX 2576).